A 196-amino-acid chain; its full sequence is Nucleoid occlusion factor SlmA (196 aa).

Residues 7-68 (PNRRDEILQA…GLIEFIEESI (62 aa)) form the HTH tetR-type domain. The H-T-H motif DNA-binding region spans 31-50 (TTAKLAKQVGVSEAALYRHF). A coiled-coil region spans residues 71-93 (RVNRILEDEKDTLKRIELLLKLL).

Belongs to the nucleoid occlusion factor SlmA family. In terms of assembly, homodimer. Interacts with FtsZ.

The protein resides in the cytoplasm. Its subcellular location is the nucleoid. Required for nucleoid occlusion (NO) phenomenon, which prevents Z-ring formation and cell division over the nucleoid. Acts as a DNA-associated cell division inhibitor that binds simultaneously chromosomal DNA and FtsZ, and disrupts the assembly of FtsZ polymers. SlmA-DNA-binding sequences (SBS) are dispersed on non-Ter regions of the chromosome, preventing FtsZ polymerization at these regions. The protein is Nucleoid occlusion factor SlmA of Aliivibrio fischeri (strain MJ11) (Vibrio fischeri).